We begin with the raw amino-acid sequence, 251 residues long: Carboxy-S-adenosyl-L-methionine synthase (251 aa).

Residues Tyr-48, 73-75 (GCS), Asn-140, and Arg-207 contribute to the S-adenosyl-L-methionine site.

It belongs to the class I-like SAM-binding methyltransferase superfamily. Cx-SAM synthase family. In terms of assembly, homodimer.

It carries out the reaction prephenate + S-adenosyl-L-methionine = carboxy-S-adenosyl-L-methionine + 3-phenylpyruvate + H2O. Functionally, catalyzes the conversion of S-adenosyl-L-methionine (SAM) to carboxy-S-adenosyl-L-methionine (Cx-SAM). This Hydrogenovibrio crunogenus (strain DSM 25203 / XCL-2) (Thiomicrospira crunogena) protein is Carboxy-S-adenosyl-L-methionine synthase.